The sequence spans 500 residues: Na(+)/H(+) antiporter NhaB (500 aa).

12 helical membrane-spanning segments follow: residues Leu34–Phe54, Met58–Leu78, Val96–Phe116, Ala129–Leu149, Thr150–Ala170, Leu205–Pro225, Phe241–Val261, Ile311–Ile331, Phe350–Ile370, Met394–Ile414, Ala450–Ile470, and Met477–Thr497.

It belongs to the NhaB Na(+)/H(+) (TC 2.A.34) antiporter family.

The protein resides in the cell inner membrane. It carries out the reaction 2 Na(+)(in) + 3 H(+)(out) = 2 Na(+)(out) + 3 H(+)(in). In terms of biological role, na(+)/H(+) antiporter that extrudes sodium in exchange for external protons. This is Na(+)/H(+) antiporter NhaB from Pseudomonas entomophila (strain L48).